Reading from the N-terminus, the 200-residue chain is NAD(P)H dehydrogenase (quinone) (200 aa).

The Flavodoxin-like domain occupies 4–191 (VLVLYYSSYG…DIARYQGKHV (188 aa)). Residues 10–15 (SSYGHV) and 79–81 (TRF) each bind FMN. Tyrosine 12 is a binding site for NAD(+). Residue tryptophan 99 participates in substrate binding. FMN-binding positions include 114-120 (STGTQHG) and histidine 135.

This sequence belongs to the WrbA family. FMN serves as cofactor.

It catalyses the reaction a quinone + NADH + H(+) = a quinol + NAD(+). The enzyme catalyses a quinone + NADPH + H(+) = a quinol + NADP(+). This chain is NAD(P)H dehydrogenase (quinone), found in Burkholderia cenocepacia (strain ATCC BAA-245 / DSM 16553 / LMG 16656 / NCTC 13227 / J2315 / CF5610) (Burkholderia cepacia (strain J2315)).